The primary structure comprises 373 residues: Cobalt-precorrin-5B C(1)-methyltransferase (373 aa).

The protein belongs to the CbiD family.

It catalyses the reaction Co-precorrin-5B + S-adenosyl-L-methionine = Co-precorrin-6A + S-adenosyl-L-homocysteine. It functions in the pathway cofactor biosynthesis; adenosylcobalamin biosynthesis; cob(II)yrinate a,c-diamide from sirohydrochlorin (anaerobic route): step 6/10. Functionally, catalyzes the methylation of C-1 in cobalt-precorrin-5B to form cobalt-precorrin-6A. This is Cobalt-precorrin-5B C(1)-methyltransferase from Listeria welshimeri serovar 6b (strain ATCC 35897 / DSM 20650 / CCUG 15529 / CIP 8149 / NCTC 11857 / SLCC 5334 / V8).